We begin with the raw amino-acid sequence, 184 residues long: Inorganic pyrophosphatase (184 aa).

Positions 19, 33, and 45 each coordinate substrate. The Mg(2+) site is built by Asp-55, Asp-60, and Asp-92. Tyr-129 contacts substrate.

The protein belongs to the PPase family. In terms of assembly, homohexamer. It depends on Mg(2+) as a cofactor.

The protein localises to the cytoplasm. The catalysed reaction is diphosphate + H2O = 2 phosphate + H(+). Its function is as follows. Catalyzes the hydrolysis of inorganic pyrophosphate (PPi) forming two phosphate ions. The polypeptide is Inorganic pyrophosphatase (Mycoplasma pneumoniae (strain ATCC 29342 / M129 / Subtype 1) (Mycoplasmoides pneumoniae)).